The following is a 210-amino-acid chain: Redox-sensing transcriptional repressor Rex (210 aa).

A DNA-binding region (H-T-H motif) is located at residues 17–56 (KYHRYLYELLKNDVDRISSKELSEKIGFTASQIRQDLNCF). Position 91–96 (91–96 (GAGNIG)) interacts with NAD(+).

The protein belongs to the transcriptional regulatory Rex family. In terms of assembly, homodimer.

It is found in the cytoplasm. Modulates transcription in response to changes in cellular NADH/NAD(+) redox state. The polypeptide is Redox-sensing transcriptional repressor Rex (Clostridium botulinum (strain ATCC 19397 / Type A)).